Consider the following 111-residue polypeptide: Small ribosomal subunit protein bS16 (111 aa).

The disordered stretch occupies residues 92-111 (MDVKAKNRKARSSKQEAKEA).

This sequence belongs to the bacterial ribosomal protein bS16 family.

The polypeptide is Small ribosomal subunit protein bS16 (Rickettsia akari (strain Hartford)).